The following is a 296-amino-acid chain: HTH-type transcriptional activator AmpR (296 aa).

The region spanning 6–63 (LPLNALRAFEASARHLSFTRAAIELCVTQAAVSHQVKSLEERLGVALFKRLPRGLMLT) is the HTH lysR-type domain. The H-T-H motif DNA-binding region spans 23–42 (FTRAAIELCVTQAAVSHQVK). Positions 83 to 296 (LLERFEGGHY…EMAAVEARGR (214 aa)) are includes the LysR substrate-binding / effector-binding domain, involved in binding to specific cell-wall-derived muropeptide products, some of which have signaling functions, leading to disparate responses such as antibiotic resistance, virulence, and host cell inflammation. In terms of domain architecture, LysR substrate-binding spans 91-289 (HYRDVLTVGA…AFRGWLLEMA (199 aa)).

This sequence belongs to the LysR transcriptional regulatory family. Homodimer.

The protein localises to the cytoplasm. The protein resides in the membrane. Its function is as follows. Transcription regulator that plays a critical role in the expression of beta-lactamase AmpC, acting by positive regulation of the ampC gene. Has a wider role in the regulation of expression of genes involved in proteolysis, quorum sensing, and virulence. Acts by binding directly to the promoter region of the ampC gene. Probably does not regulate transcription of its own gene. The sequence is that of HTH-type transcriptional activator AmpR (ampR) from Pseudomonas aeruginosa (strain ATCC 15692 / DSM 22644 / CIP 104116 / JCM 14847 / LMG 12228 / 1C / PRS 101 / PAO1).